The following is a 551-amino-acid chain: Alkaline nuclease (551 aa).

This sequence belongs to the herpesviridae alkaline nuclease family. In terms of assembly, interacts with major DNA-binding protein; this interaction increases the nuclease processivity of the alkaline exonuclease.

Its subcellular location is the host nucleus. It localises to the host cytoplasm. Functionally, plays a role in processing non linear or branched viral DNA intermediates in order to promote the production of mature packaged unit-length linear progeny viral DNA molecules. Exhibits endonuclease and exonuclease activities and accepts both double-stranded and single-stranded DNA as substrate. Exonuclease digestion of DNA is in the 5'-&gt; 3' direction and the products are 5'-monophosphate nucleosides. Additionally, forms a recombinase with the major DNA-binding protein, which displays strand exchange activity. The protein is Alkaline nuclease of Homo sapiens (Human).